The primary structure comprises 705 residues: Effector protein hopD1 (705 aa).

Composition is skewed to polar residues over residues 1–11 (MNPLRSIQHNI) and 28–41 (QAQQ…SPSQ). 2 disordered regions span residues 1-41 (MNPL…SPSQ) and 173-207 (SSSL…DSGS). Positions 173–184 (SSSLETPLLSSP) are enriched in low complexity.

The protein resides in the secreted. Effector protein involved in non-host recognition. This is Effector protein hopD1 (hopD1) from Pseudomonas syringae pv. tomato (strain ATCC BAA-871 / DC3000).